The chain runs to 255 residues: Chlorocatechol 1,2-dioxygenase (255 aa).

Positions 130, 164, 188, and 190 each coordinate Fe cation.

Belongs to the intradiol ring-cleavage dioxygenase family. Fe(3+) serves as cofactor.

It carries out the reaction 3,5-dichlorocatechol + O2 = (2E,4E)-2,4-dichloromuconate + 2 H(+). It functions in the pathway aromatic compound metabolism; 3-chlorocatechol degradation. Functionally, preferentially converts 3,5-dichlorocatechol as opposed to other chlorinated catechols. Retains diminished activity toward non-chlorinated substrates. The sequence is that of Chlorocatechol 1,2-dioxygenase (tfdC) from Burkholderia cepacia (Pseudomonas cepacia).